Here is a 150-residue protein sequence, read N- to C-terminus: Transcription antitermination protein NusB (150 aa).

This sequence belongs to the NusB family.

Involved in transcription antitermination. Required for transcription of ribosomal RNA (rRNA) genes. Binds specifically to the boxA antiterminator sequence of the ribosomal RNA (rrn) operons. The sequence is that of Transcription antitermination protein NusB from Streptococcus pyogenes serotype M2 (strain MGAS10270).